Here is a 91-residue protein sequence, read N- to C-terminus: UPF0358 protein SAS1047 (91 aa).

Belongs to the UPF0358 family.

In Staphylococcus aureus (strain MSSA476), this protein is UPF0358 protein SAS1047.